A 226-amino-acid chain; its full sequence is Glutathione S-transferase kappa 1 (226 aa).

Glutathione is bound at residue 16-18 (SPY). N6-succinyllysine is present on residues Lys-36 and Lys-49. Residue Asn-53 coordinates glutathione. N6-acetyllysine; alternate occurs at positions 68 and 74. An N6-succinyllysine; alternate mark is found at Lys-68 and Lys-74. Residue Lys-85 is modified to N6-acetyllysine. An N6-acetyllysine; alternate mark is found at Lys-93 and Lys-116. An N6-succinyllysine; alternate mark is found at Lys-93 and Lys-116. Lys-144 carries the post-translational modification N6-succinyllysine. Lys-158 carries the N6-acetyllysine; alternate modification. Position 158 is an N6-succinyllysine; alternate (Lys-158). Lys-165 carries the N6-acetyllysine modification. Lys-167 and Lys-177 each carry N6-acetyllysine; alternate. N6-succinyllysine; alternate is present on residues Lys-167 and Lys-177. Glutathione is bound at residue Leu-183. Lys-193 bears the N6-succinyllysine mark. Position 200–201 (200–201 (SD)) interacts with glutathione.

It belongs to the GST superfamily. Kappa family. As to quaternary structure, homodimer.

It localises to the mitochondrion matrix. The enzyme catalyses RX + glutathione = an S-substituted glutathione + a halide anion + H(+). In terms of biological role, glutathione S-transferase that catalyzes the conjugation of glutathione to exogenous and endogenous compounds. The chain is Glutathione S-transferase kappa 1 (Gstk1) from Rattus norvegicus (Rat).